Consider the following 479-residue polypeptide: MRVLSVGSEIYPLVKTGGLADVMGALPAALSSEGITVRSLVPGYPAVTAALDRAESVLRIPDLFGGAAEIRAAAAGRHDLFVLDAPHLYARPGNPYIASNGVDWSDNAQRFAALCRAGALLARGAVGGFVPDLLHAHDWQAGLVPAYLHYEGHAAPPCVFTVHNLAFQGWFPAHLLGALGLPASAFVIDGVEYFGGIGFLKAGLQFADAITTVSPRYATEIATQDGGMGLDGLLRKRGSAVHGILNGLDTATWNPATDEHLAARYDVANLAARAVNKRAVQARMGLAPDPRALLFGVVSRLAGQKGIDLIIEALPVLDALGAQLAVLGTGETGIEASLREAVAARPGRVAAIIGFEESLSHLIQGGADAILVPSRFEPCGLTQLAAQRYGAIPVVSLVGGLVDTVIDANPVAISAGVATGIQFGPVSEAGLSDGLRRTAALYADPDKWSRMQRNAMALDVSWTEPARNYAALYRSLTSR.

Position 15 (Lys15) interacts with ADP-alpha-D-glucose.

It belongs to the glycosyltransferase 1 family. Bacterial/plant glycogen synthase subfamily.

The catalysed reaction is [(1-&gt;4)-alpha-D-glucosyl](n) + ADP-alpha-D-glucose = [(1-&gt;4)-alpha-D-glucosyl](n+1) + ADP + H(+). Its pathway is glycan biosynthesis; glycogen biosynthesis. Functionally, synthesizes alpha-1,4-glucan chains using ADP-glucose. In Acidiphilium cryptum (strain JF-5), this protein is Glycogen synthase.